The chain runs to 709 residues: Fatty acid oxidation complex subunit alpha (709 aa).

Residues methionine 1 to proline 188 form an enoyl-CoA hydratase region. The tract at residues arginine 308 to phenylalanine 709 is 3-hydroxyacyl-CoA dehydrogenase.

The protein in the N-terminal section; belongs to the enoyl-CoA hydratase/isomerase family. This sequence in the central section; belongs to the 3-hydroxyacyl-CoA dehydrogenase family. In terms of assembly, heterotetramer of two alpha chains (FadJ) and two beta chains (FadI).

The protein resides in the cytoplasm. It catalyses the reaction a (3S)-3-hydroxyacyl-CoA = a (2E)-enoyl-CoA + H2O. It carries out the reaction a 4-saturated-(3S)-3-hydroxyacyl-CoA = a (3E)-enoyl-CoA + H2O. The catalysed reaction is a (3S)-3-hydroxyacyl-CoA + NAD(+) = a 3-oxoacyl-CoA + NADH + H(+). The enzyme catalyses (3S)-3-hydroxybutanoyl-CoA = (3R)-3-hydroxybutanoyl-CoA. The protein operates within lipid metabolism; fatty acid beta-oxidation. In terms of biological role, catalyzes the formation of a hydroxyacyl-CoA by addition of water on enoyl-CoA. Also exhibits 3-hydroxyacyl-CoA epimerase and 3-hydroxyacyl-CoA dehydrogenase activities. The sequence is that of Fatty acid oxidation complex subunit alpha from Shewanella sp. (strain MR-7).